Reading from the N-terminus, the 315-residue chain is 4-diphosphocytidyl-2-C-methyl-D-erythritol kinase (315 aa).

Residue lysine 10 is part of the active site. ATP is bound at residue 107–117; sequence PVAGGMAGGSA. Aspartate 148 is a catalytic residue. The disordered stretch occupies residues 292–315; the sequence is HPATSPVPGPAKNRGAHIVSIESE.

The protein belongs to the GHMP kinase family. IspE subfamily.

The catalysed reaction is 4-CDP-2-C-methyl-D-erythritol + ATP = 4-CDP-2-C-methyl-D-erythritol 2-phosphate + ADP + H(+). The protein operates within isoprenoid biosynthesis; isopentenyl diphosphate biosynthesis via DXP pathway; isopentenyl diphosphate from 1-deoxy-D-xylulose 5-phosphate: step 3/6. Functionally, catalyzes the phosphorylation of the position 2 hydroxy group of 4-diphosphocytidyl-2C-methyl-D-erythritol. The protein is 4-diphosphocytidyl-2-C-methyl-D-erythritol kinase of Corynebacterium efficiens (strain DSM 44549 / YS-314 / AJ 12310 / JCM 11189 / NBRC 100395).